The primary structure comprises 415 residues: Gamma-glutamyl phosphate reductase (415 aa).

The protein belongs to the gamma-glutamyl phosphate reductase family.

The protein localises to the cytoplasm. It catalyses the reaction L-glutamate 5-semialdehyde + phosphate + NADP(+) = L-glutamyl 5-phosphate + NADPH + H(+). It functions in the pathway amino-acid biosynthesis; L-proline biosynthesis; L-glutamate 5-semialdehyde from L-glutamate: step 2/2. Functionally, catalyzes the NADPH-dependent reduction of L-glutamate 5-phosphate into L-glutamate 5-semialdehyde and phosphate. The product spontaneously undergoes cyclization to form 1-pyrroline-5-carboxylate. The protein is Gamma-glutamyl phosphate reductase of Bacillus cereus (strain AH187).